The sequence spans 285 residues: ATP synthase gamma chain (285 aa).

It belongs to the ATPase gamma chain family. As to quaternary structure, F-type ATPases have 2 components, CF(1) - the catalytic core - and CF(0) - the membrane proton channel. CF(1) has five subunits: alpha(3), beta(3), gamma(1), delta(1), epsilon(1). CF(0) has three main subunits: a, b and c.

It is found in the cell membrane. Its function is as follows. Produces ATP from ADP in the presence of a proton gradient across the membrane. The gamma chain is believed to be important in regulating ATPase activity and the flow of protons through the CF(0) complex. The sequence is that of ATP synthase gamma chain from Lysinibacillus sphaericus (strain C3-41).